Reading from the N-terminus, the 99-residue chain is Large ribosomal subunit protein eL21 (99 aa).

Residues 1-14 (MPNSNGPLSNSGGK) show a composition bias toward polar residues. The segment at 1 to 38 (MPNSNGPLSNSGGKLQNDPRDRGTSPPQRAIADYDDGE) is disordered.

It belongs to the eukaryotic ribosomal protein eL21 family.

In Halobacterium salinarum (strain ATCC 29341 / DSM 671 / R1), this protein is Large ribosomal subunit protein eL21.